A 2399-amino-acid chain; its full sequence is Norsolorinic acid synthase (2399 aa).

The tract at residues 10-247 (LVFGDQTYDF…RQIPIYVPAH (238 aa)) is starter unit:ACP transacylase (SAT) domain. Positions 372–805 (KSKLAIVSMS…GGNTALLIED (434 aa)) constitute a Ketosynthase family 3 (KS3) domain. Residues C544, H679, and H722 each act as for beta-ketoacyl synthase activity in the active site. Residues 905-1192 (FAFTGQGSQY…LCGMIKNILG (288 aa)) form a malonyl-CoA:ACP transacylase (MAT) domain region. Catalysis depends on S995, which acts as the For acyl/malonyl transferase activity. The disordered stretch occupies residues 1307-1327 (VQEAPAAKTETKKMSKLDPTK). A compositionally biased stretch (basic and acidic residues) spans 1315–1327 (TETKKMSKLDPTK). An N-terminal hotdog fold region spans residues 1340-1483 (HKVIEEKTEP…CTVRFTTDSQ (144 aa)). One can recognise a PKS/mFAS DH domain in the interval 1340–1658 (HKVIEEKTEP…LRSVPRKALR (319 aa)). Residues 1353 to 1658 (QFTVETDISR…LRSVPRKALR (306 aa)) form a product template (PT) domain region. The Proton acceptor; for dehydratase activity role is filled by H1372. The interval 1510–1658 (LTHYNTKSGY…LRSVPRKALR (149 aa)) is C-terminal hotdog fold. The active-site Proton donor; for dehydratase activity is the D1570. Positions 1665-1734 (MDKGIRQRGG…AALKASVPKA (70 aa)) are disordered. Low complexity predominate over residues 1677-1698 (GAAKGAVAAPAPAKKMVEPVKA). Over residues 1708–1723 (AAPPSPSKAAPPPAPK) the composition is skewed to pro residues. Low complexity predominate over residues 1724–1734 (PAALKASVPKA). 3 consecutive Carrier domains span residues 1733 to 1812 (KADP…AGAA), 1877 to 1953 (SKVF…GGSG), and 2020 to 2099 (VART…TGSS). 3 positions are modified to O-(pantetheine 4'-phosphoryl)serine: S1770, S1911, and S2057. The segment covering 2098–2115 (SSADSDSSSVASNPADPA) has biased composition (low complexity). Residues 2098-2149 (SSADSDSSSVASNPADPAATPPRSESSDTEPDDEAPSKPKSGPGSTDSCRST) form a disordered region. Residues 2140–2149 (PGSTDSCRST) show a composition bias toward polar residues. Residues 2164–2393 (TLFLLPDGGG…KARVNYVSDL (230 aa)) are thioesterase/Claisen cyclase (TE/CLC) domain. S2234 serves as the catalytic For thioesterase activity.

The cofactor is pantetheine 4'-phosphate.

It catalyses the reaction hexanoyl-[ACP] + 7 malonyl-CoA + 6 H(+) = noranthrone + holo-[ACP] + 7 CO2 + 7 CoA + 2 H2O. Its pathway is mycotoxin biosynthesis. Its function is as follows. Polyketide synthase; part of the fragmented gene cluster that mediates the biosynthesis of dothistromin (DOTH), a polyketide toxin very similar in structure to the aflatoxin precursor, versicolorin B. The first step of the pathway is the conversion of acetate to norsolorinic acid (NOR) and requires the fatty acid synthase subunits hexA and hexB, as well as the polyketide synthase pksA. PksA combines a hexanoyl starter unit and 7 malonyl-CoA extender units to synthesize the precursor NOR. The hexanoyl starter unit is provided to the acyl-carrier protein (ACP) domain by the fungal fatty acid synthase hexA/hexB. The second step is the conversion of NOR to averantin (AVN) and requires the norsolorinic acid ketoreductase nor1, which catalyzes the dehydration of norsolorinic acid to form (1'S)-averantin. The cytochrome P450 monooxygenase avnA then catalyzes the hydroxylation of AVN to 5'hydroxyaverantin (HAVN). The next step is performed by adhA that transforms HAVN to averufin (AVF). Averufin might then be converted to hydroxyversicolorone by cypX and avfA. Hydroxyversicolorone is further converted versiconal hemiacetal acetate (VHA) by moxY. VHA is then the substrate for the versiconal hemiacetal acetate esterase est1 to yield versiconal (VAL). Versicolorin B synthase vbsA then converts VAL to versicolorin B (VERB) by closing the bisfuran ring. Then, the activity of the versicolorin B desaturase verB leads to versicolorin A (VERA). DotB, a predicted chloroperoxidase, may perform epoxidation of the A-ring of VERA. Alternatively, a cytochrome P450, such as cypX or avnA could catalyze this step. It is also possible that another, uncharacterized, cytochrome P450 enzyme is responsible for this step. Opening of the epoxide could potentially be achieved by the epoxide hydrolase epoA. However, epoA seems not to be required for DOTH biosynthesis, but other epoxide hydrolases may have the ability to complement this hydrolysis. Alternatively, opening of the epoxide ring could be achieved non-enzymatically. The next step is the deoxygenation of ring A to yield the 5,8-dihydroxyanthraquinone which is most likely catalyzed by the NADPH dehydrogenase encoded by ver1. The last stages of DOTH biosynthesis are proposed to involve hydroxylation of the bisfuran. OrdB and norB might have oxidative roles here. An alternative possibility is that cytochrome P450 monoogenases such as avnA and cypX might perform these steps in addition to previously proposed steps. This chain is Norsolorinic acid synthase, found in Dothistroma septosporum (Red band needle blight fungus).